Consider the following 546-residue polypeptide: Chaperonin GroEL 1 (546 aa).

Residues 29-32 (TLGP), 86-90 (DGTTT), Gly-414, and Asp-499 contribute to the ATP site.

Belongs to the chaperonin (HSP60) family. In terms of assembly, forms a cylinder of 14 subunits composed of two heptameric rings stacked back-to-back. Interacts with the co-chaperonin GroES.

The protein resides in the cytoplasm. It carries out the reaction ATP + H2O + a folded polypeptide = ADP + phosphate + an unfolded polypeptide.. Together with its co-chaperonin GroES, plays an essential role in assisting protein folding. The GroEL-GroES system forms a nano-cage that allows encapsulation of the non-native substrate proteins and provides a physical environment optimized to promote and accelerate protein folding. This chain is Chaperonin GroEL 1, found in Roseiflexus sp. (strain RS-1).